The sequence spans 875 residues: Alanine--tRNA ligase (875 aa).

The Zn(2+) site is built by histidine 563, histidine 567, cysteine 665, and histidine 669.

This sequence belongs to the class-II aminoacyl-tRNA synthetase family. It depends on Zn(2+) as a cofactor.

It localises to the cytoplasm. It catalyses the reaction tRNA(Ala) + L-alanine + ATP = L-alanyl-tRNA(Ala) + AMP + diphosphate. In terms of biological role, catalyzes the attachment of alanine to tRNA(Ala) in a two-step reaction: alanine is first activated by ATP to form Ala-AMP and then transferred to the acceptor end of tRNA(Ala). Also edits incorrectly charged Ser-tRNA(Ala) and Gly-tRNA(Ala) via its editing domain. This Desulfitobacterium hafniense (strain Y51) protein is Alanine--tRNA ligase.